The primary structure comprises 315 residues: Olfactory receptor 2T5 (315 aa).

The Extracellular segment spans residues 1–29 (MANITRMANHTGKLDFILMGLFRRSKHPA). Residues Asn-3 and Asn-9 are each glycosylated (N-linked (GlcNAc...) asparagine). Residues 30–53 (LLSVVIFVVFLKALSGNAVLILLI) form a helical membrane-spanning segment. The Cytoplasmic portion of the chain corresponds to 54-61 (HCDAHLHS). A helical membrane pass occupies residues 62 to 83 (PMYFFISQLSLMDMAYISVTVP). At 84 to 104 (KMLLDQVMGVNKVSAPECGMQ) the chain is on the extracellular side. A disulfide bridge connects residues Cys-101 and Cys-193. Residues 105-124 (MFLYLTLAGSEFFLLATMAY) traverse the membrane as a helical segment. Over 125 to 143 (DRYVAICHPLRYPVLMNHR) the chain is Cytoplasmic. A helical membrane pass occupies residues 144-162 (VCLFLASGCWFLGSVDGFM). Residues 163 to 199 (LTPITMSFPFCRSWEIHHFFCEVPAVTILSCSDTSLY) lie on the Extracellular side of the membrane. Residues 200 to 223 (ETLMYLCCVLMLLIPVTIISSSYL) form a helical membrane-spanning segment. At 224-240 (LILLTVHRMNSAEGRKK) the chain is on the cytoplasmic side. The chain crosses the membrane as a helical span at residues 241–263 (AFATCSSHLTVVILFYGAAVYTY). Over 264-276 (MLPSSYHTPEKDM) the chain is Extracellular. Residues 277 to 296 (MVSVFYTILTPVLNPLIYSL) form a helical membrane-spanning segment. Over 297 to 315 (RNKDVMGALKKMLTVRFVL) the chain is Cytoplasmic.

Belongs to the G-protein coupled receptor 1 family.

It localises to the cell membrane. Its function is as follows. Odorant receptor. This Homo sapiens (Human) protein is Olfactory receptor 2T5 (OR2T5).